The sequence spans 349 residues: RING-H2 finger protein ATL48 (349 aa).

Positions 1–85 constitute an HIG1 domain; the sequence is MSSVEPDMED…DNPWKKLLLS (85 aa). Serine 2 bears the N-acetylserine mark. The next 3 membrane-spanning stretches (helical) occupy residues 21–41, 55–75, and 121–141; these read PLVP…LISF, ARVV…YYYG, and CLVI…YLIF. Residues 207 to 249 form an RING-type; atypical zinc finger; that stretch reads CAVCLNEFSDTDKLRLLPVCSHAFHLHCIDTWLLSNSTCPLCR.

The protein belongs to the RING-type zinc finger family. ATL subfamily.

The protein localises to the membrane. It carries out the reaction S-ubiquitinyl-[E2 ubiquitin-conjugating enzyme]-L-cysteine + [acceptor protein]-L-lysine = [E2 ubiquitin-conjugating enzyme]-L-cysteine + N(6)-ubiquitinyl-[acceptor protein]-L-lysine.. The protein operates within protein modification; protein ubiquitination. The chain is RING-H2 finger protein ATL48 (ATL48) from Arabidopsis thaliana (Mouse-ear cress).